The primary structure comprises 906 residues: Cadherin-2 (906 aa).

An N-terminal signal peptide occupies residues 1–25; it reads MCRIVGAPRTLLPLLAALLQASVDA. Residues 26–159 constitute a propeptide that is removed on maturation; it reads SGEISLCKTG…HNGYLQRQKR (134 aa). Phosphoserine occurs at positions 96 and 135. 5 consecutive Cadherin domains span residues 160–267, 268–392, 393–497, 498–603, and 604–714; these read DWVI…RPEF, LHQV…GEVP, ENRV…NPYF, APNP…DNAP, and QVLP…DVDR. At 160-724 the chain is on the extracellular side; that stretch reads DWVIPPINLP…IVGAGLGTGA (565 aa). Glutamate 170 lines the Ca(2+) pocket. An N-linked (GlcNAc...) asparagine glycan is attached at asparagine 190. Residues aspartate 226, glutamate 228, aspartate 259, methionine 260, asparagine 261, aspartate 262, and asparagine 263 each coordinate Ca(2+). N-linked (GlcNAc...) asparagine glycosylation is present at asparagine 273. 3 residues coordinate Ca(2+): aspartate 293, aspartate 295, and asparagine 301. The N-linked (GlcNAc...) asparagine glycan is linked to asparagine 325. Aspartate 353 is a binding site for Ca(2+). Residues asparagine 357, asparagine 402, asparagine 572, asparagine 622, asparagine 651, and asparagine 692 are each glycosylated (N-linked (GlcNAc...) asparagine). The chain crosses the membrane as a helical span at residues 725 to 746; sequence IIAILLCIIILLILVLMFVVWM. Residues 747–906 are Cytoplasmic-facing; it reads KRRDKERQAK…LADMYGGGDD (160 aa). Residues 863–880 show a composition bias toward low complexity; it reads SGSTAGSLSSLNSSSSGG. The disordered stretch occupies residues 863–884; sequence SGSTAGSLSSLNSSSSGGEQDY.

Homodimer (via extracellular region). Can also form heterodimers with other cadherins (via extracellular region). Dimerization occurs in trans, i.e. with a cadherin chain from another cell. Interacts with CDCP1. Interacts with PCDH8; this complex may also include TAOK2. The interaction with PCDH8 may lead to internalization through TAOK2/p38 MAPK pathway. Identified in a complex containing FGFR4, NCAM1, CDH2, PLCG1, FRS2, SRC, SHC1, GAP43 and CTTN. May interact with OBSCN (via protein kinase domain 2). Interacts with FBXO45. In terms of processing, cleaved by MMP24. Ectodomain cleavage leads to the generation of a soluble 90 kDa N-terminal soluble fragment and a 45 kDa membrane-bound C-terminal fragment 1 (CTF1), which is further cleaved by gamma-secretase into a 35 kDa. Cleavage in neural stem cells by MMP24 affects CDH2-mediated anchorage of neural stem cells to ependymocytes in the adult subependymal zone, leading to modulate neural stem cell quiescence. Post-translationally, may be phosphorylated by OBSCN. In terms of tissue distribution, detected in liver, kidney, heart and brain capillaries.

The protein resides in the cell membrane. Its subcellular location is the sarcolemma. The protein localises to the cell junction. It is found in the cell surface. It localises to the desmosome. The protein resides in the adherens junction. Functionally, calcium-dependent cell adhesion protein; preferentially mediates homotypic cell-cell adhesion by dimerization with a CDH2 chain from another cell. Cadherins may thus contribute to the sorting of heterogeneous cell types. Acts as a regulator of neural stem cells quiescence by mediating anchorage of neural stem cells to ependymocytes in the adult subependymal zone: upon cleavage by MMP24, CDH2-mediated anchorage is affected, leading to modulate neural stem cell quiescence. Plays a role in cell-to-cell junction formation between pancreatic beta cells and neural crest stem (NCS) cells, promoting the formation of processes by NCS cells. Required for proper neurite branching. Required for pre- and postsynaptic organization. CDH2 may be involved in neuronal recognition mechanism. In hippocampal neurons, may regulate dendritic spine density. The polypeptide is Cadherin-2 (CDH2) (Bos taurus (Bovine)).